The sequence spans 331 residues: MVRVAIDAMGGDFGPAPIVEGTLLALNEKDFIPFLVGNKEIIEPLIPQKYKKTLEIIDCKDFIKMEEGASSAIRRKDSSIYVATELAKEGKVDALVSAGHSGATMSLATLRIGRIEGASRPAICAIMPRQDGKQSLILDAGANVDCKPEHLYEFALMGYEYSKNVMGYENPRIGLLSNGEEESKGNELTKSAFSRLKTLKGFVGNVEGHNIFDGSTEVIVCDGFVGNIVLKTSEGVAESITTLIKNFVKVSLTGVVGALFMKNVFKKLKKRMDYAEYGGAPLLGVNGNVIICHGKSNAKAIKNAIFQALTSVDQKINENIIKAFASHPSKE.

Belongs to the PlsX family. In terms of assembly, homodimer. Probably interacts with PlsY.

It is found in the cytoplasm. It catalyses the reaction a fatty acyl-[ACP] + phosphate = an acyl phosphate + holo-[ACP]. The protein operates within lipid metabolism; phospholipid metabolism. Its function is as follows. Catalyzes the reversible formation of acyl-phosphate (acyl-PO(4)) from acyl-[acyl-carrier-protein] (acyl-ACP). This enzyme utilizes acyl-ACP as fatty acyl donor, but not acyl-CoA. The polypeptide is Phosphate acyltransferase (Wolinella succinogenes (strain ATCC 29543 / DSM 1740 / CCUG 13145 / JCM 31913 / LMG 7466 / NCTC 11488 / FDC 602W) (Vibrio succinogenes)).